The following is a 94-amino-acid chain: Integration host factor subunit beta (94 aa).

The protein belongs to the bacterial histone-like protein family. In terms of assembly, heterodimer of an alpha and a beta chain.

This protein is one of the two subunits of integration host factor, a specific DNA-binding protein that functions in genetic recombination as well as in transcriptional and translational control. This is Integration host factor subunit beta (ihfB) from Haemophilus influenzae (strain ATCC 51907 / DSM 11121 / KW20 / Rd).